Here is a 545-residue protein sequence, read N- to C-terminus: Glucose-6-phosphate isomerase (545 aa).

Residue glutamate 351 is the Proton donor of the active site. Active-site residues include histidine 382 and lysine 510.

It belongs to the GPI family.

It localises to the cytoplasm. It carries out the reaction alpha-D-glucose 6-phosphate = beta-D-fructose 6-phosphate. The protein operates within carbohydrate biosynthesis; gluconeogenesis. It participates in carbohydrate degradation; glycolysis; D-glyceraldehyde 3-phosphate and glycerone phosphate from D-glucose: step 2/4. Its function is as follows. Catalyzes the reversible isomerization of glucose-6-phosphate to fructose-6-phosphate. In Shewanella baltica (strain OS195), this protein is Glucose-6-phosphate isomerase.